Here is a 178-residue protein sequence, read N- to C-terminus: MSATVRILGIDPGSRVTGFGVIDVRGRDHFYVASGCIKTPADAPLADRIAVIVRHIGEVVTVYKPQQAAVEQVFVNVNPASTLMLGQARGAALAALVSHKLPVSEYTALQVKQAVVGKGKAAKEQVQHMVVQMLGLSGTPQPDAADGLAVALTHALRNHGLAAKLNPSGMQVKRGRFQ.

Active-site residues include Asp11, Glu71, and Asp143. Positions 11, 71, and 143 each coordinate Mg(2+).

Belongs to the RuvC family. In terms of assembly, homodimer which binds Holliday junction (HJ) DNA. The HJ becomes 2-fold symmetrical on binding to RuvC with unstacked arms; it has a different conformation from HJ DNA in complex with RuvA. In the full resolvosome a probable DNA-RuvA(4)-RuvB(12)-RuvC(2) complex forms which resolves the HJ. The cofactor is Mg(2+).

The protein resides in the cytoplasm. It carries out the reaction Endonucleolytic cleavage at a junction such as a reciprocal single-stranded crossover between two homologous DNA duplexes (Holliday junction).. In terms of biological role, the RuvA-RuvB-RuvC complex processes Holliday junction (HJ) DNA during genetic recombination and DNA repair. Endonuclease that resolves HJ intermediates. Cleaves cruciform DNA by making single-stranded nicks across the HJ at symmetrical positions within the homologous arms, yielding a 5'-phosphate and a 3'-hydroxyl group; requires a central core of homology in the junction. The consensus cleavage sequence is 5'-(A/T)TT(C/G)-3'. Cleavage occurs on the 3'-side of the TT dinucleotide at the point of strand exchange. HJ branch migration catalyzed by RuvA-RuvB allows RuvC to scan DNA until it finds its consensus sequence, where it cleaves and resolves the cruciform DNA. The chain is Crossover junction endodeoxyribonuclease RuvC from Neisseria meningitidis serogroup A / serotype 4A (strain DSM 15465 / Z2491).